Here is a 200-residue protein sequence, read N- to C-terminus: ATP synthase subunit b (200 aa).

Residues 12 to 32 traverse the membrane as a helical segment; sequence ILSGLAVAVAILVPVLALASG.

Belongs to the ATPase B chain family. As to quaternary structure, F-type ATPases have 2 components, F(1) - the catalytic core - and F(0) - the membrane proton channel. F(1) has five subunits: alpha(3), beta(3), gamma(1), delta(1), epsilon(1). F(0) has three main subunits: a(1), b(2) and c(10-14). The alpha and beta chains form an alternating ring which encloses part of the gamma chain. F(1) is attached to F(0) by a central stalk formed by the gamma and epsilon chains, while a peripheral stalk is formed by the delta and b chains.

It is found in the cell inner membrane. Its function is as follows. F(1)F(0) ATP synthase produces ATP from ADP in the presence of a proton or sodium gradient. F-type ATPases consist of two structural domains, F(1) containing the extramembraneous catalytic core and F(0) containing the membrane proton channel, linked together by a central stalk and a peripheral stalk. During catalysis, ATP synthesis in the catalytic domain of F(1) is coupled via a rotary mechanism of the central stalk subunits to proton translocation. Functionally, component of the F(0) channel, it forms part of the peripheral stalk, linking F(1) to F(0). The protein is ATP synthase subunit b of Trichlorobacter lovleyi (strain ATCC BAA-1151 / DSM 17278 / SZ) (Geobacter lovleyi).